A 459-amino-acid polypeptide reads, in one-letter code: Glycerol-3-phosphate acyltransferase, chloroplastic (459 aa).

The transit peptide at 1–90 directs the protein to the chloroplast; the sequence is MTLTFSSSAA…FNEAAGETPS (90 aa). An HXXXXD motif motif is present at residues 229-234; it reads HQSEAD.

The protein belongs to the GPAT/DAPAT family.

It is found in the plastid. Its subcellular location is the chloroplast stroma. The catalysed reaction is sn-glycerol 3-phosphate + an acyl-CoA = a 1-acyl-sn-glycero-3-phosphate + CoA. It participates in phospholipid metabolism; CDP-diacylglycerol biosynthesis; CDP-diacylglycerol from sn-glycerol 3-phosphate: step 1/3. Esterifies acyl-group from acyl-ACP to the sn-1 position of glycerol-3-phosphate. The enzyme from chilling-resistant plants discriminates against non-fluid palmitic acid and selects oleic acid whereas the enzyme from sensitive plants accepts both fatty acids. This is an oleate-selective acyltransferase. The polypeptide is Glycerol-3-phosphate acyltransferase, chloroplastic (ATS1) (Arabidopsis thaliana (Mouse-ear cress)).